Here is a 1074-residue protein sequence, read N- to C-terminus: Zinc finger protein 518B (1074 aa).

Polar residues predominate over residues 12 to 24 (HLNGGHNSLTMSP). Positions 12 to 36 (HLNGGHNSLTMSPKQPDANGAPRPN) are disordered. 2 C2H2-type zinc fingers span residues 162–184 (FICSHCSYISYTKGEFQRHLVKH) and 190–213 (YQCEYCDYGAIRNDYIVKHTKRVH). Residues Lys482, Lys491, and Lys558 each participate in a glycyl lysine isopeptide (Lys-Gly) (interchain with G-Cter in SUMO2) cross-link. The interval 568–590 (SNRKQEDNQTEEHKAVSTVGQIS) is disordered. The segment covering 570-582 (RKQEDNQTEEHKA) has biased composition (basic and acidic residues). A Glycyl lysine isopeptide (Lys-Gly) (interchain with G-Cter in SUMO2) cross-link involves residue Lys594. Disordered stretches follow at residues 603–632 (TGEDRSQQPGDKPLELKNSERTNNTNDGPV) and 678–704 (KPSSLASNSAHRRSVGQASKGTSKATS). Positions 604–622 (GEDRSQQPGDKPLELKNSE) are enriched in basic and acidic residues. A compositionally biased stretch (polar residues) spans 693-704 (GQASKGTSKATS). Residues Lys809, Lys846, and Lys860 each participate in a glycyl lysine isopeptide (Lys-Gly) (interchain with G-Cter in SUMO2) cross-link. A C2H2-type 3 zinc finger spans residues 1036–1058 (FKCWFCGRLYEDQEEWMSHGQRH).

This sequence belongs to the krueppel C2H2-type zinc-finger protein family.

It is found in the nucleus. Functionally, through its association with the EHMT1-EHMT2/G9A and PRC2/EED-EZH2 histone methyltransferase complexes may function in gene silencing, regulating repressive post-translational methylation of histone tails at promoters of target genes. The protein is Zinc finger protein 518B (ZNF518B) of Homo sapiens (Human).